Reading from the N-terminus, the 381-residue chain is 1-deoxy-D-xylulose 5-phosphate reductoisomerase (381 aa).

NADPH is bound by residues Thr10, Gly11, Ser12, Ile13, Gly36, Lys37, Asn38, and Asn122. 1-deoxy-D-xylulose 5-phosphate is bound at residue Lys123. Glu124 contributes to the NADPH binding site. Mn(2+) is bound at residue Asp148. 1-deoxy-D-xylulose 5-phosphate-binding residues include Ser149, Glu150, Ser173, and His196. Glu150 provides a ligand contact to Mn(2+). Gly202 is an NADPH binding site. Residues Ser209, Asn214, Lys215, and Glu218 each contribute to the 1-deoxy-D-xylulose 5-phosphate site. Glu218 lines the Mn(2+) pocket.

This sequence belongs to the DXR family. It depends on Mg(2+) as a cofactor. Mn(2+) is required as a cofactor.

It carries out the reaction 2-C-methyl-D-erythritol 4-phosphate + NADP(+) = 1-deoxy-D-xylulose 5-phosphate + NADPH + H(+). The protein operates within isoprenoid biosynthesis; isopentenyl diphosphate biosynthesis via DXP pathway; isopentenyl diphosphate from 1-deoxy-D-xylulose 5-phosphate: step 1/6. Functionally, catalyzes the NADPH-dependent rearrangement and reduction of 1-deoxy-D-xylulose-5-phosphate (DXP) to 2-C-methyl-D-erythritol 4-phosphate (MEP). This Desulfitobacterium hafniense (strain DSM 10664 / DCB-2) protein is 1-deoxy-D-xylulose 5-phosphate reductoisomerase.